A 551-amino-acid chain; its full sequence is RCC1 and BTB domain-containing protein 2 (551 aa).

RCC1 repeat units lie at residues 64-115 (NDEI…VLAT), 117-169 (EGEV…VLTS), 171-222 (GEVF…AVVD), 223-274 (TGEV…VLTD), 276-326 (GQVY…AAKT), and 328-382 (GGHV…TVAE). Positions 394-457 (ADLKFLVDGK…LYTDSISLSP (64 aa)) constitute a BTB domain.

It localises to the cytoplasmic vesicle. The protein localises to the secretory vesicle. It is found in the acrosome. The polypeptide is RCC1 and BTB domain-containing protein 2 (RCBTB2) (Homo sapiens (Human)).